Here is a 513-residue protein sequence, read N- to C-terminus: Histidine ammonia-lyase (513 aa).

Positions 144–146 form a cross-link, 5-imidazolinone (Ala-Gly); that stretch reads ASG. A 2,3-didehydroalanine (Ser) modification is found at serine 145.

The protein belongs to the PAL/histidase family. Post-translationally, contains an active site 4-methylidene-imidazol-5-one (MIO), which is formed autocatalytically by cyclization and dehydration of residues Ala-Ser-Gly.

It localises to the cytoplasm. The enzyme catalyses L-histidine = trans-urocanate + NH4(+). It participates in amino-acid degradation; L-histidine degradation into L-glutamate; N-formimidoyl-L-glutamate from L-histidine: step 1/3. This is Histidine ammonia-lyase from Streptococcus pyogenes serotype M18 (strain MGAS8232).